A 283-amino-acid polypeptide reads, in one-letter code: MAGNFWQSSHYLQWILDKQDLLKERQKDLKFLSEEEYWKLQIFFTNVIQALGEHLKLRQQVIATATVYFKRFYARYSLKSIDPVLMAPTCVFLASKVEEFGVVSNTRLIAAATSVLKTRFSYAFPKEFPYRMNHILECEFYLLELMDCCLIVYHPYRPLLQYVQDMGQEDMLLPLAWRIVNDTYRTDLCLLYPPFMIALACLHVACVVQQKDARQWFAELSVDMEKILEIIRVILKLYEQWKNFDERKEMATILSKMPKPKPPPNSEGEQGPNGSQNSSYSQS.

One can recognise a Cyclin N-terminal domain in the interval 46–144 (NVIQALGEHL…ILECEFYLLE (99 aa)). The tract at residues 252–283 (TILSKMPKPKPPPNSEGEQGPNGSQNSSYSQS) is disordered. Positions 272-283 (PNGSQNSSYSQS) are enriched in polar residues. Serine 275 is modified (phosphoserine).

This sequence belongs to the cyclin family. Cyclin C subfamily. Component of the Mediator complex, which is composed of MED1, MED4, MED6, MED7, MED8, MED9, MED10, MED11, MED12, MED13, MED13L, MED14, MED15, MED16, MED17, MED18, MED19, MED20, MED21, MED22, MED23, MED24, MED25, MED26, MED27, MED29, MED30, MED31, CCNC, CDK8 and CDC2L6/CDK11. The MED12, MED13, CCNC and CDK8 subunits form a distinct module termed the CDK8 module. Mediator containing the CDK8 module is less active than Mediator lacking this module in supporting transcriptional activation. Individual preparations of the Mediator complex lacking one or more distinct subunits have been variously termed ARC, CRSP, DRIP, PC2, SMCC and TRAP. The cylin/CDK pair formed by CCNC/CDK8 also associates with the large subunit of RNA polymerase II. Highest levels in pancreas. High levels in heart, liver, skeletal muscle and kidney. Low levels in brain.

The protein resides in the nucleus. Functionally, component of the Mediator complex, a coactivator involved in regulated gene transcription of nearly all RNA polymerase II-dependent genes. Mediator functions as a bridge to convey information from gene-specific regulatory proteins to the basal RNA polymerase II transcription machinery. Mediator is recruited to promoters by direct interactions with regulatory proteins and serves as a scaffold for the assembly of a functional preinitiation complex with RNA polymerase II and the general transcription factors. Binds to and activates cyclin-dependent kinase CDK8 that phosphorylates the CTD (C-terminal domain) of the large subunit of RNA polymerase II (RNAp II), which may inhibit the formation of a transcription initiation complex. The polypeptide is Cyclin-C (CCNC) (Homo sapiens (Human)).